A 339-amino-acid chain; its full sequence is UDP-N-acetylglucosamine/UDP-N-acetylgalactosamine transporter nstp-4 (339 aa).

The next 8 helical transmembrane spans lie at 44–64 (LSSTAVVCAEIIKLITCFFVI), 94–114 (LKVAVPAIMYVIQNNLLFFAL), 148–168 (YNWMALILLTAGVALVQYPSG), 186–206 (ILGLGAVLAACFSSGFAGVYF), 224–244 (LAFFSVFGALLVCWLYDWQAI), 255–275 (GVIWIVVLLQAYGGLVIALVV), 281–301 (ILKGFAVSLSIILSSFTSWLV), and 305–325 (LTITTTFAIGATVVIFATFLY).

This sequence belongs to the nucleotide-sugar transporter family. SLC35A subfamily. In terms of tissue distribution, widely expressed, including in pharynx and pharyngeal gland cells, seam cells, spermatheca, stomatointestinal muscle, vulva, and body wall muscle.

Its subcellular location is the golgi apparatus membrane. Its function is as follows. Uridine diphosphate-N-acetylglucosamine (UDP-GlcNAc) transporter in the Golgi apparatus. UDP-N-acetylgalactosamine (UDP-GalNAc) transporter in the Golgi apparatus. Apparently transports UDP-GlcNAc and UDP-GalNAc simultaneously, and independently, by an unknown mechanism. Functions redundantly with nucleotide sugar transporter srf-3. May be involved in gonadal development. This chain is UDP-N-acetylglucosamine/UDP-N-acetylgalactosamine transporter nstp-4, found in Caenorhabditis elegans.